Consider the following 132-residue polypeptide: Large ribosomal subunit protein uL14 (132 aa).

It belongs to the universal ribosomal protein uL14 family. Part of the 50S ribosomal subunit. Forms a cluster with proteins L3 and L24e, part of which may contact the 16S rRNA in 2 intersubunit bridges.

Its function is as follows. Binds to 23S rRNA. Forms part of two intersubunit bridges in the 70S ribosome. The polypeptide is Large ribosomal subunit protein uL14 (Thermoplasma acidophilum (strain ATCC 25905 / DSM 1728 / JCM 9062 / NBRC 15155 / AMRC-C165)).